The primary structure comprises 483 residues: ATP synthase subunit beta (483 aa).

169–176 contacts ATP; that stretch reads GGAGVGKT.

This sequence belongs to the ATPase alpha/beta chains family. F-type ATPases have 2 components, CF(1) - the catalytic core - and CF(0) - the membrane proton channel. CF(1) has five subunits: alpha(3), beta(3), gamma(1), delta(1), epsilon(1). CF(0) has three main subunits: a(1), b(2) and c(9-12). The alpha and beta chains form an alternating ring which encloses part of the gamma chain. CF(1) is attached to CF(0) by a central stalk formed by the gamma and epsilon chains, while a peripheral stalk is formed by the delta and b chains.

It is found in the cell membrane. The catalysed reaction is ATP + H2O + 4 H(+)(in) = ADP + phosphate + 5 H(+)(out). Its function is as follows. Produces ATP from ADP in the presence of a proton gradient across the membrane. The catalytic sites are hosted primarily by the beta subunits. In Rhodococcus opacus (strain B4), this protein is ATP synthase subunit beta.